The following is a 201-amino-acid chain: Recombination protein RecR (201 aa).

The C4-type zinc finger occupies 57–72; the sequence is CADCRTFTEQEVCNIC. A Toprim domain is found at 81–176; sequence GQICVVESPA…EASRIAHGVP (96 aa).

It belongs to the RecR family.

May play a role in DNA repair. It seems to be involved in an RecBC-independent recombinational process of DNA repair. It may act with RecF and RecO. The sequence is that of Recombination protein RecR from Escherichia coli O17:K52:H18 (strain UMN026 / ExPEC).